The primary structure comprises 297 residues: Large ribosomal subunit protein uL18 (297 aa).

It belongs to the universal ribosomal protein uL18 family. Component of the large ribosomal subunit (LSU).

It localises to the cytoplasm. It is found in the nucleus. Component of the ribosome, a large ribonucleoprotein complex responsible for the synthesis of proteins in the cell. The small ribosomal subunit (SSU) binds messenger RNAs (mRNAs) and translates the encoded message by selecting cognate aminoacyl-transfer RNA (tRNA) molecules. The large subunit (LSU) contains the ribosomal catalytic site termed the peptidyl transferase center (PTC), which catalyzes the formation of peptide bonds, thereby polymerizing the amino acids delivered by tRNAs into a polypeptide chain. The nascent polypeptides leave the ribosome through a tunnel in the LSU and interact with protein factors that function in enzymatic processing, targeting, and the membrane insertion of nascent chains at the exit of the ribosomal tunnel. The sequence is that of Large ribosomal subunit protein uL18 (RpL5) from Aedes aegypti (Yellowfever mosquito).